Consider the following 260-residue polypeptide: Acetylglutamate kinase (260 aa).

Residues glycine 41–glycine 42, arginine 63, and asparagine 157 contribute to the substrate site.

It belongs to the acetylglutamate kinase family. ArgB subfamily.

Its subcellular location is the cytoplasm. It carries out the reaction N-acetyl-L-glutamate + ATP = N-acetyl-L-glutamyl 5-phosphate + ADP. Its pathway is amino-acid biosynthesis; L-arginine biosynthesis; N(2)-acetyl-L-ornithine from L-glutamate: step 2/4. In terms of biological role, catalyzes the ATP-dependent phosphorylation of N-acetyl-L-glutamate. The protein is Acetylglutamate kinase of Acidobacterium capsulatum (strain ATCC 51196 / DSM 11244 / BCRC 80197 / JCM 7670 / NBRC 15755 / NCIMB 13165 / 161).